Reading from the N-terminus, the 414-residue chain is Alanine--glyoxylate aminotransferase (414 aa).

The transit peptide at 1 to 23 (MFQALAKASAALGPRAAGWVRTM) directs the protein to the mitochondrion. Lys231 carries the post-translational modification N6-(pyridoxal phosphate)lysine. Lys256 and Lys334 each carry N6-acetyllysine. Arg382 serves as a coordination point for substrate.

This sequence belongs to the class-V pyridoxal-phosphate-dependent aminotransferase family. In terms of assembly, homodimer. The cofactor is pyridoxal 5'-phosphate.

Its subcellular location is the peroxisome. It is found in the mitochondrion matrix. It carries out the reaction L-serine + pyruvate = 3-hydroxypyruvate + L-alanine. It catalyses the reaction glyoxylate + L-alanine = glycine + pyruvate. Functionally, catalyzes the transamination of glyoxylate to glycine and contributes to the glyoxylate detoxification. Catalyzes the transamination between L-serine and pyruvate and weakly contributes to gluconeogenesis from the L-serine metabolism. The sequence is that of Alanine--glyoxylate aminotransferase from Callithrix jacchus (White-tufted-ear marmoset).